A 169-amino-acid chain; its full sequence is Disulfide bond formation protein B (169 aa).

At 1–14 the chain is on the cytoplasmic side; the sequence is MSNDTFYLKREKRF. A helical transmembrane segment spans residues 15–31; sequence LVLLGIICLSLIGGALY. The Periplasmic portion of the chain corresponds to 32-49; sequence MQIALGEAPCPLCILQRY. Cysteine 41 and cysteine 44 are disulfide-bonded. A helical transmembrane segment spans residues 50-64; that stretch reads ALLFIAIFAFIGAAM. Topologically, residues 65–71 are cytoplasmic; the sequence is NGRRGVT. Residues 72–89 form a helical membrane-spanning segment; that stretch reads VFEALVTLSALCGIAAAG. Residues 90–144 lie on the Periplasmic side of the membrane; that stretch reads RHAWILAHPSDSCGIDILQPIVDGLPLATLFPTGFQVSGFCTTPYPPVLGLSLAQ. Cysteines 102 and 130 form a disulfide. The chain crosses the membrane as a helical span at residues 145–163; that stretch reads WALTAFVLTAILVPACIIR. The Cytoplasmic portion of the chain corresponds to 164–169; the sequence is NRRKPY.

This sequence belongs to the DsbB family.

The protein localises to the cell inner membrane. Required for disulfide bond formation in some periplasmic proteins. Acts by oxidizing the DsbA protein. This Pseudomonas syringae pv. tomato (strain ATCC BAA-871 / DC3000) protein is Disulfide bond formation protein B.